The following is a 278-amino-acid chain: Small ribosomal subunit protein uS2 (278 aa).

Residues 235–278 are disordered; the sequence is QRRKDHGEGGQQAAGGGRGQRDEINVYQGGRGGRGGGPRQQQAS. 2 stretches are compositionally biased toward gly residues: residues 243-252 and 263-272; these read GGQQAAGGGR and GGRGGRGGGP.

This sequence belongs to the universal ribosomal protein uS2 family.

This Sorangium cellulosum (strain So ce56) (Polyangium cellulosum (strain So ce56)) protein is Small ribosomal subunit protein uS2.